The following is a 416-amino-acid chain: Serine hydroxymethyltransferase (416 aa).

Residues Leu121 and 125–127 each bind (6S)-5,6,7,8-tetrahydrofolate; that span reads GHL. Lys229 is subject to N6-(pyridoxal phosphate)lysine.

This sequence belongs to the SHMT family. In terms of assembly, homodimer. It depends on pyridoxal 5'-phosphate as a cofactor.

It is found in the cytoplasm. It carries out the reaction (6R)-5,10-methylene-5,6,7,8-tetrahydrofolate + glycine + H2O = (6S)-5,6,7,8-tetrahydrofolate + L-serine. It functions in the pathway one-carbon metabolism; tetrahydrofolate interconversion. It participates in amino-acid biosynthesis; glycine biosynthesis; glycine from L-serine: step 1/1. Catalyzes the reversible interconversion of serine and glycine with tetrahydrofolate (THF) serving as the one-carbon carrier. This reaction serves as the major source of one-carbon groups required for the biosynthesis of purines, thymidylate, methionine, and other important biomolecules. Also exhibits THF-independent aldolase activity toward beta-hydroxyamino acids, producing glycine and aldehydes, via a retro-aldol mechanism. This is Serine hydroxymethyltransferase from Neisseria meningitidis serogroup B (strain ATCC BAA-335 / MC58).